The following is a 446-amino-acid chain: T-box transcription factor TBX19 (446 aa).

Residues 43 to 216 (LEDAPLWQRF…YNPFAKAFLD (174 aa)) constitute a DNA-binding region (T-box).

It localises to the nucleus. In terms of biological role, transcriptional regulator involved in developmental processes. Can activate POMC gene expression and repress the alpha glycoprotein subunit and thyroid-stimulating hormone beta promoters. The protein is T-box transcription factor TBX19 of Mus musculus (Mouse).